Consider the following 238-residue polypeptide: Orotidine 5'-phosphate decarboxylase (238 aa).

Substrate is bound by residues D13, K35, 62–71 (DLKFHDIPNT), T121, R182, Q191, G211, and R212. K64 acts as the Proton donor in catalysis.

This sequence belongs to the OMP decarboxylase family. Type 1 subfamily. In terms of assembly, homodimer.

The enzyme catalyses orotidine 5'-phosphate + H(+) = UMP + CO2. It participates in pyrimidine metabolism; UMP biosynthesis via de novo pathway; UMP from orotate: step 2/2. Its function is as follows. Catalyzes the decarboxylation of orotidine 5'-monophosphate (OMP) to uridine 5'-monophosphate (UMP). The polypeptide is Orotidine 5'-phosphate decarboxylase (Saccharophagus degradans (strain 2-40 / ATCC 43961 / DSM 17024)).